Here is a 315-residue protein sequence, read N- to C-terminus: 4-hydroxy-3-methylbut-2-enyl diphosphate reductase (315 aa).

Cysteine 18 provides a ligand contact to [4Fe-4S] cluster. Positions 47 and 80 each coordinate (2E)-4-hydroxy-3-methylbut-2-enyl diphosphate. Dimethylallyl diphosphate-binding residues include histidine 47 and histidine 80. Isopentenyl diphosphate-binding residues include histidine 47 and histidine 80. Cysteine 102 contributes to the [4Fe-4S] cluster binding site. Histidine 130 is a (2E)-4-hydroxy-3-methylbut-2-enyl diphosphate binding site. Histidine 130 is a binding site for dimethylallyl diphosphate. An isopentenyl diphosphate-binding site is contributed by histidine 130. Glutamate 132 functions as the Proton donor in the catalytic mechanism. Residue threonine 171 coordinates (2E)-4-hydroxy-3-methylbut-2-enyl diphosphate. Position 201 (cysteine 201) interacts with [4Fe-4S] cluster. Residues serine 229, serine 230, asparagine 231, and serine 274 each coordinate (2E)-4-hydroxy-3-methylbut-2-enyl diphosphate. Positions 229, 230, 231, and 274 each coordinate dimethylallyl diphosphate. Residues serine 229, serine 230, asparagine 231, and serine 274 each coordinate isopentenyl diphosphate.

This sequence belongs to the IspH family. The cofactor is [4Fe-4S] cluster.

It catalyses the reaction isopentenyl diphosphate + 2 oxidized [2Fe-2S]-[ferredoxin] + H2O = (2E)-4-hydroxy-3-methylbut-2-enyl diphosphate + 2 reduced [2Fe-2S]-[ferredoxin] + 2 H(+). The enzyme catalyses dimethylallyl diphosphate + 2 oxidized [2Fe-2S]-[ferredoxin] + H2O = (2E)-4-hydroxy-3-methylbut-2-enyl diphosphate + 2 reduced [2Fe-2S]-[ferredoxin] + 2 H(+). It participates in isoprenoid biosynthesis; dimethylallyl diphosphate biosynthesis; dimethylallyl diphosphate from (2E)-4-hydroxy-3-methylbutenyl diphosphate: step 1/1. It functions in the pathway isoprenoid biosynthesis; isopentenyl diphosphate biosynthesis via DXP pathway; isopentenyl diphosphate from 1-deoxy-D-xylulose 5-phosphate: step 6/6. In terms of biological role, catalyzes the conversion of 1-hydroxy-2-methyl-2-(E)-butenyl 4-diphosphate (HMBPP) into a mixture of isopentenyl diphosphate (IPP) and dimethylallyl diphosphate (DMAPP). Acts in the terminal step of the DOXP/MEP pathway for isoprenoid precursor biosynthesis. The sequence is that of 4-hydroxy-3-methylbut-2-enyl diphosphate reductase from Hyphomonas neptunium (strain ATCC 15444).